A 152-amino-acid chain; its full sequence is ARL14 effector protein-like (152 aa).

The tract at residues 1 to 21 (MNEQSEKNNSIQERHTDHSFP) is disordered.

The polypeptide is ARL14 effector protein-like (ARL14EPL) (Homo sapiens (Human)).